Consider the following 494-residue polypeptide: Cytochrome P450 2C44 (494 aa).

Residues 1–25 (MELLGLPTLALLVLVMSLSLLSVWT) form the signal peptide. Ser-131 carries the post-translational modification Phosphoserine. N6-acetyllysine occurs at positions 253 and 379. A heme-binding site is contributed by Cys-439.

This sequence belongs to the cytochrome P450 family. Heme serves as cofactor. Highly expressed in liver, particularly in hepatocytes and bile duct epithelial cells (at protein level). Expressed in nephron segments. Prominent expression is detected in proximal tubules at the corticomedullary junction (at protein level). Also expressed in renal cortical collecting duct. Lower expression levels are detected in adrenal glands.

It localises to the endoplasmic reticulum membrane. It is found in the microsome membrane. It carries out the reaction (5Z,8Z,11Z,14Z)-eicosatetraenoate + reduced [NADPH--hemoprotein reductase] + O2 = (8R,9S)-epoxy-(5Z,11Z,14Z)-eicosatrienoate + oxidized [NADPH--hemoprotein reductase] + H2O + H(+). It catalyses the reaction (5Z,8Z,11Z,14Z)-eicosatetraenoate + reduced [NADPH--hemoprotein reductase] + O2 = (11R,12S)-epoxy-(5Z,8Z,14Z)-eicosatrienoate + oxidized [NADPH--hemoprotein reductase] + H2O + H(+). The catalysed reaction is (5Z,8Z,11Z,14Z)-eicosatetraenoate + reduced [NADPH--hemoprotein reductase] + O2 = 14,15-epoxy-(5Z,8Z,11Z)-eicosatrienoate + oxidized [NADPH--hemoprotein reductase] + H2O + H(+). The enzyme catalyses (5Z,8Z,11Z,14Z,17Z)-eicosapentaenoate + reduced [NADPH--hemoprotein reductase] + O2 = 8,9-epoxy-(5Z,11Z,14Z,17Z)-eicosatetraenoate + oxidized [NADPH--hemoprotein reductase] + H2O + H(+). It carries out the reaction (5Z,8Z,11Z,14Z,17Z)-eicosapentaenoate + reduced [NADPH--hemoprotein reductase] + O2 = 11,12-epoxy-(5Z,8Z,14Z,17Z)-eicosatetraenoate + oxidized [NADPH--hemoprotein reductase] + H2O + H(+). It catalyses the reaction (5Z,8Z,11Z,14Z,17Z)-eicosapentaenoate + reduced [NADPH--hemoprotein reductase] + O2 = 14,15-epoxy-(5Z,8Z,11Z,17Z)-eicosatetraenoate + oxidized [NADPH--hemoprotein reductase] + H2O + H(+). The catalysed reaction is (5Z,8Z,11Z,14Z,17Z)-eicosapentaenoate + reduced [NADPH--hemoprotein reductase] + O2 = (17R,18S)-epoxy-(5Z,8Z,11Z,14Z)-eicosatetraenoate + oxidized [NADPH--hemoprotein reductase] + H2O + H(+). The enzyme catalyses (5Z,8Z,11Z,14Z,17Z)-eicosapentaenoate + reduced [NADPH--hemoprotein reductase] + O2 = (17S,18R)-epoxy-(5Z,8Z,11Z,14Z)-eicosatetraenoate + oxidized [NADPH--hemoprotein reductase] + H2O + H(+). It carries out the reaction 20-hydroxy-(5Z,8Z,11Z,14Z)-eicosatetraenoate + reduced [NADPH--hemoprotein reductase] + O2 = 20-hydroxy-8,9-epoxy-(5Z,11Z,14Z)-eicosatrienoate + oxidized [NADPH--hemoprotein reductase] + H2O + H(+). It participates in lipid metabolism; arachidonate metabolism. In terms of biological role, a cytochrome P450 monooxygenase involved in polyunsaturated fatty acids (PUFAs) metabolism and signaling. Catalyzes preferentially the epoxidation of double bonds of PUFAs. Converts arachidonic acid (ARA, C20:4(n-6)) primarily to stereospecific products 8R,9S-epoxyeicosatrienoate (EET) and 11R,12S-EET. Plays a major role in the formation of EETs and hydroxy-EETs (HEETs) in kidney. Via EETs may inhibit the epithelial sodium channels (ENaCs) in nephron segments, preventing excessive sodium absorption during high dietary salt intake. Participates in the formation of anti-inflammatory hydroxyepoxyeicosatrienoic acids (HEETs) by converting 20-hydroxyeicosatetraenoic acid (20-HETE) to 20,8,9-HEET, an activator of PPARA. Metabolizes eicosapentaenoic acid (EPA, C20:5(n-3)) to epoxyeicosatetraenoic acid (EETeTr) regioisomers, 8,9-, 11,12-, 14,15-, and 17,18- EETeTr, preferentially producing 17R,18S enantiomer. Mechanistically, uses molecular oxygen inserting one oxygen atom into a substrate, and reducing the second into a water molecule, with two electrons provided by NADPH via cytochrome P450 reductase (CPR; NADPH-ferrihemoprotein reductase). The polypeptide is Cytochrome P450 2C44 (Mus musculus (Mouse)).